Here is a 344-residue protein sequence, read N- to C-terminus: S-methyl-5'-thioadenosine phosphorylase (344 aa).

Phosphate is bound by residues threonine 45, 88-89 (RH), and 121-122 (SA). Residue methionine 238 participates in substrate binding. Residue serine 239 participates in phosphate binding. 262–264 (DYD) is a substrate binding site.

The protein belongs to the PNP/MTAP phosphorylase family. MTAP subfamily. As to quaternary structure, homotrimer.

The protein resides in the cytoplasm. It localises to the nucleus. It carries out the reaction S-methyl-5'-thioadenosine + phosphate = 5-(methylsulfanyl)-alpha-D-ribose 1-phosphate + adenine. Its pathway is amino-acid biosynthesis; L-methionine biosynthesis via salvage pathway; S-methyl-5-thio-alpha-D-ribose 1-phosphate from S-methyl-5'-thioadenosine (phosphorylase route): step 1/1. In terms of biological role, catalyzes the reversible phosphorylation of S-methyl-5'-thioadenosine (MTA) to adenine and 5-methylthioribose-1-phosphate. Involved in the breakdown of MTA, a major by-product of polyamine biosynthesis. Responsible for the first step in the methionine salvage pathway after MTA has been generated from S-adenosylmethionine. Has broad substrate specificity with 6-aminopurine nucleosides as preferred substrates. This is S-methyl-5'-thioadenosine phosphorylase from Candida albicans (strain WO-1) (Yeast).